A 727-amino-acid chain; its full sequence is Glycerol-3-phosphate dehydrogenase, mitochondrial (727 aa).

The N-terminal 42 residues, 1 to 42, are a transit peptide targeting the mitochondrion; sequence MAFQKAVKGTILVGGGALATVLGLSQFAHYRRKQMNLAYVKA. Residue 71 to 99 participates in FAD binding; sequence DILVIGGGATGSGCALDAVTRGLKTALVE. A Phosphotyrosine modification is found at Tyr601. EF-hand domains are found at residues 623 to 658 and 659 to 694; these read SDIDRYKKRFHKFDADQKGFITIVDVQRVLESINVQ and MDENTLHEILNEVDLNKNGQVELNEFLQLMSAIQKG. 5 residues coordinate Ca(2+): Asp672, Asn674, Asn676, Gln678, and Glu683.

It belongs to the FAD-dependent glycerol-3-phosphate dehydrogenase family. FAD is required as a cofactor.

The protein localises to the mitochondrion. It carries out the reaction a quinone + sn-glycerol 3-phosphate = dihydroxyacetone phosphate + a quinol. The protein operates within polyol metabolism; glycerol degradation via glycerol kinase pathway; glycerone phosphate from sn-glycerol 3-phosphate (anaerobic route): step 1/1. Calcium-binding enhance the activity of the enzyme. Its function is as follows. Calcium-responsive mitochondrial glycerol-3-phosphate dehydrogenase which seems to be a key component of the pancreatic beta-cell glucose-sensing device. The polypeptide is Glycerol-3-phosphate dehydrogenase, mitochondrial (Homo sapiens (Human)).